A 150-amino-acid chain; its full sequence is Large ribosomal subunit protein uL15 (150 aa).

The tract at residues 12–43 (AKKRKKRVGCGESSGHGKTSGRGHKGQKARAG) is disordered. Basic residues predominate over residues 30–39 (TSGRGHKGQK).

The protein belongs to the universal ribosomal protein uL15 family. In terms of assembly, part of the 50S ribosomal subunit.

Its function is as follows. Binds to the 23S rRNA. The sequence is that of Large ribosomal subunit protein uL15 from Methylacidiphilum infernorum (isolate V4) (Methylokorus infernorum (strain V4)).